We begin with the raw amino-acid sequence, 603 residues long: Proline--tRNA ligase (603 aa).

This sequence belongs to the class-II aminoacyl-tRNA synthetase family. ProS type 1 subfamily. Homodimer.

The protein resides in the cytoplasm. The enzyme catalyses tRNA(Pro) + L-proline + ATP = L-prolyl-tRNA(Pro) + AMP + diphosphate. Functionally, catalyzes the attachment of proline to tRNA(Pro) in a two-step reaction: proline is first activated by ATP to form Pro-AMP and then transferred to the acceptor end of tRNA(Pro). As ProRS can inadvertently accommodate and process non-cognate amino acids such as alanine and cysteine, to avoid such errors it has two additional distinct editing activities against alanine. One activity is designated as 'pretransfer' editing and involves the tRNA(Pro)-independent hydrolysis of activated Ala-AMP. The other activity is designated 'posttransfer' editing and involves deacylation of mischarged Ala-tRNA(Pro). The misacylated Cys-tRNA(Pro) is not edited by ProRS. This Arthrobacter sp. (strain FB24) protein is Proline--tRNA ligase.